A 552-amino-acid chain; its full sequence is Putative pentatricopeptide repeat-containing protein At1g64310 (552 aa).

PPR repeat units lie at residues 39–69, 70–104, 105–139, 140–170, 171–205, 206–240, 241–271, 272–306, 307–341, 342–372, 373–407, 408–438, and 444–474; these read DPYFATQLARFYALNDDLISARKLFDVFPER, SVFLWNSIIRAYAKAHQFTTVLSLFSQILRSDTRP, DNFTYACLARGFSESFDTKGLRCIHGIAIVSGLGF, DQICGSAIVKAYSKAGLIVEASKLFCSIPDP, DLALWNVMILGYGCCGFWDKGINLFNLMQHRGHQP, NCYTMVALTSGLIDPSLLLVAWSVHAFCLKINLDS, HSYVGCALVNMYSRCMCIASACSVFNSISEP, DLVACSSLITGYSRCGNHKEALHLFAELRMSGKKP, DCVLVAIVLGSCAELSDSVSGKEVHSYVIRLGLEL, DIKVCSALIDMYSKCGLLKCAMSLFAGIPEK, NIVSFNSLILGLGLHGFASTAFEKFTEILEMGLIP, DEITFSALLCTCCHSGLLNKGQEIFERMKSE, and QTEHYVYMVKLMGMAGKLEEAFEFVMSLQKP. The tract at residues 479–552 is type E motif; degenerate; the sequence is ILGALLSCCE…GGKLPGISWF (74 aa).

It belongs to the PPR family. PCMP-E subfamily.

This chain is Putative pentatricopeptide repeat-containing protein At1g64310 (PCMP-E65), found in Arabidopsis thaliana (Mouse-ear cress).